A 296-amino-acid polypeptide reads, in one-letter code: Complex I intermediate-associated protein 30, mitochondrial (296 aa).

The transit peptide at 1-29 (MNSLLRQGLRLGCCLPAVQQQIHTTAVHR) directs the protein to the mitochondrion.

Belongs to the CIA30 family. As to quaternary structure, associates with mitochondrial complex I assembly intermediates during its biogenesis.

It localises to the mitochondrion. Its function is as follows. Chaperone protein involved in the assembly of the mitochondrial NADH:ubiquinone oxidoreductase complex (complex I). This chain is Complex I intermediate-associated protein 30, mitochondrial, found in Drosophila melanogaster (Fruit fly).